A 532-amino-acid polypeptide reads, in one-letter code: 2,3-bisphosphoglycerate-independent phosphoglycerate mutase (532 aa).

Residues aspartate 15 and serine 65 each coordinate Mn(2+). Serine 65 serves as the catalytic Phosphoserine intermediate. Residues histidine 126, 156–157, arginine 188, arginine 194, 258–261, and lysine 331 contribute to the substrate site; these read RD and RPDR. Residues aspartate 398, histidine 402, aspartate 439, histidine 440, and histidine 457 each coordinate Mn(2+).

It belongs to the BPG-independent phosphoglycerate mutase family. As to quaternary structure, monomer. Requires Mn(2+) as cofactor.

The catalysed reaction is (2R)-2-phosphoglycerate = (2R)-3-phosphoglycerate. It functions in the pathway carbohydrate degradation; glycolysis; pyruvate from D-glyceraldehyde 3-phosphate: step 3/5. In terms of biological role, catalyzes the interconversion of 2-phosphoglycerate and 3-phosphoglycerate. This chain is 2,3-bisphosphoglycerate-independent phosphoglycerate mutase, found in Synechococcus elongatus (strain ATCC 33912 / PCC 7942 / FACHB-805) (Anacystis nidulans R2).